Consider the following 103-residue polypeptide: Secreted LysM effector Mgx1LysM (103 aa).

An N-terminal signal peptide occupies residues 1–18 (MKVTTIIAALLSVAVVDA). 2 disulfide bridges follow: C31–C89 and C62–C97. Positions 37-85 (IPYVVKKGDTLTHIAHDIYKRKVGICDLAYTNHIGYNPDLIYEDQTLLI) constitute a LysM domain. Chitin-binding residues include G44, T48, D75, and I77.

It belongs to the secreted LysM effector family. As to quaternary structure, forms homodimers in a chitin-independent manner through interactions at the N-termini of Mgx1LysM monomers. Homodimers are further polymerized in a chitin-dependent manner.

It is found in the secreted. The protein resides in the cell wall. In terms of biological role, secreted effector that enables the plant pathogenic fungus to manipulate host defenses for successful infection. Binds chitin and suppresses the chitin-induced reactive oxygen species (ROS) burst. Chitin-induced polymerization of homodimers forms a contiguous Mg1LysM highly oligomeric super-complexe that is anchored to the chitin in the fungal cell wall to prevent hydrolysis by host chitinases. The chain is Secreted LysM effector Mgx1LysM from Zymoseptoria tritici (strain CBS 115943 / IPO323) (Speckled leaf blotch fungus).